Consider the following 490-residue polypeptide: Cytochrome P450 2W1 (490 aa).

The signal sequence occupies residues 1–22 (MALLLLLFLGLLGLWGLLCACA). Asn177 is a glycosylation site (N-linked (GlcNAc...) asparagine). Position 433 (Cys433) interacts with heme.

The protein belongs to the cytochrome P450 family. Heme serves as cofactor. Very low levels are detected in fetal and adult tissues. Highly expressed in several tumor samples, in particular colon and adrenal tumors.

It is found in the endoplasmic reticulum lumen. The protein resides in the cell membrane. It localises to the microsome membrane. It carries out the reaction all-trans-retinoate + reduced [NADPH--hemoprotein reductase] + O2 = all-trans-4-hydroxyretinoate + oxidized [NADPH--hemoprotein reductase] + H2O + H(+). The enzyme catalyses 1-(9Z-octadecenoyl)-sn-glycero-3-phosphocholine + reduced [NADPH--hemoprotein reductase] + O2 = 1-[8-hydroxy-(9Z)-octadecenoyl]-sn-glycero-3-phosphocholine + oxidized [NADPH--hemoprotein reductase] + H2O + H(+). It catalyses the reaction 1-(9Z-octadecenoyl)-sn-glycero-3-phosphocholine + reduced [NADPH--hemoprotein reductase] + O2 = 1-[11-hydroxy-(9Z)-octadecenoyl]-sn-glycero-3-phosphocholine + oxidized [NADPH--hemoprotein reductase] + H2O + H(+). The catalysed reaction is 1-(9Z-octadecenoyl)-sn-glycero-3-phosphocholine + reduced [NADPH--hemoprotein reductase] + O2 = 1-[(9S,10R)-epoxy-octadecanoyl]-sn-glycero-3-phosphocholine + oxidized [NADPH--hemoprotein reductase] + H2O + H(+). It carries out the reaction 1-(9Z-octadecenoyl)-sn-glycero-3-phosphocholine + reduced [NADPH--hemoprotein reductase] + O2 = 1-[(9R,10S)-epoxy-octadecanoyl]-sn-glycero-3-phosphocholine + oxidized [NADPH--hemoprotein reductase] + H2O + H(+). Its function is as follows. A cytochrome P450 monooxygenase that may play a role in retinoid and phospholipid metabolism. Catalyzes the hydroxylation of saturated carbon hydrogen bonds. Hydroxylates all trans-retinoic acid (atRA) to 4-hydroxyretinoate and may regulate atRA clearance. Other retinoids such as all-trans retinol and all-trans retinal are potential endogenous substrates. Catalyzes both epoxidation of double bonds and hydroxylation of carbon hydrogen bonds of the fatty acyl chain of 1-acylphospholipids/2-lysophospholipids. Can metabolize various lysophospholipids classes including lysophosphatidylcholines (LPCs), lysophosphatidylinositols (LPIs), lysophosphatidylserines (LPSs), lysophosphatidylglycerols (LPGs), lysophosphatidylethanolamines (LPEs) and lysophosphatidic acids (LPAs). Has low or no activity toward 2-acylphospholipids/1-lysophospholipids, diacylphospholipids and free fatty acids. May play a role in tumorigenesis by activating procarcinogens such as aflatoxin B1, polycyclic aromatic hydrocarbon dihydrodiols and aromatic amines. Mechanistically, uses molecular oxygen inserting one oxygen atom into a substrate, and reducing the second into a water molecule, with two electrons provided by NADPH via cytochrome P450 reductase (CPR; NADPH-ferrihemoprotein reductase). The protein is Cytochrome P450 2W1 of Homo sapiens (Human).